A 189-amino-acid chain; its full sequence is ATP synthase subunit b (189 aa).

Residues 25 to 45 traverse the membrane as a helical segment; sequence LPVWPEVVIGLICFGIVFFVF.

The protein belongs to the ATPase B chain family. As to quaternary structure, F-type ATPases have 2 components, F(1) - the catalytic core - and F(0) - the membrane proton channel. F(1) has five subunits: alpha(3), beta(3), gamma(1), delta(1), epsilon(1). F(0) has three main subunits: a(1), b(2) and c(10-14). The alpha and beta chains form an alternating ring which encloses part of the gamma chain. F(1) is attached to F(0) by a central stalk formed by the gamma and epsilon chains, while a peripheral stalk is formed by the delta and b chains.

The protein resides in the cell membrane. Its function is as follows. F(1)F(0) ATP synthase produces ATP from ADP in the presence of a proton or sodium gradient. F-type ATPases consist of two structural domains, F(1) containing the extramembraneous catalytic core and F(0) containing the membrane proton channel, linked together by a central stalk and a peripheral stalk. During catalysis, ATP synthesis in the catalytic domain of F(1) is coupled via a rotary mechanism of the central stalk subunits to proton translocation. Functionally, component of the F(0) channel, it forms part of the peripheral stalk, linking F(1) to F(0). The protein is ATP synthase subunit b of Streptomyces griseus subsp. griseus (strain JCM 4626 / CBS 651.72 / NBRC 13350 / KCC S-0626 / ISP 5235).